The primary structure comprises 935 residues: Pre-mRNA-splicing factor CWC22 homolog (935 aa).

Residues 1–179 form a disordered region; it reads MSRSPSPDSP…PKDLLRTRTG (179 aa). Composition is skewed to basic and acidic residues over residues 13–25 and 49–70; these read VRDD…REQS and ESSR…DEKM. Over residues 84–148 the composition is skewed to basic residues; the sequence is QHRRHRESRS…RSPARRRSPV (65 aa). The segment covering 159 to 175 has biased composition (basic and acidic residues); that stretch reads PTEEPEKKKNDPKDLLR. Positions 212-400 constitute an MIF4G domain; that stretch reads KKKIHGLVNR…ETAMQIRKDK (189 aa). The disordered stretch occupies residues 463–489; the sequence is ADISSDEEEEVEDDDEESEAEEAPRKT. The span at 465 to 483 shows a compositional bias: acidic residues; the sequence is ISSDEEEEVEDDDEESEAE. The MI domain occupies 502–633; sequence AFRREVYLTL…EWKILADVKM (132 aa). The tract at residues 725-935 is disordered; the sequence is KAAQSSSDSS…VGSDDRRRRH (211 aa). Residues 729–763 show a composition bias toward low complexity; that stretch reads SSSDSSSDSSDSSDSSDSSGSSDSSDDSSSSSSSD. Basic and acidic residues-rich tracts occupy residues 780 to 891 and 897 to 935; these read KKKE…DRKE and DRRD…RRRH.

Belongs to the CWC22 family.

The protein localises to the nucleus. The protein resides in the nucleus speckle. Its function is as follows. Required for early embryogenesis and tissue differentiation. Required for pre-mRNA splicing and for exon-junction complex (EJC) assembly. Hinders EIF4A3 from non-specifically binding RNA and escorts it to the splicing machinery to promote EJC assembly on mature mRNAs. Through its role in EJC assembly, required for nonsense-mediated mRNA decay. The protein is Pre-mRNA-splicing factor CWC22 homolog of Caenorhabditis briggsae.